We begin with the raw amino-acid sequence, 1183 residues long: DNA-directed RNA polymerase subunit beta (1183 aa).

Belongs to the RNA polymerase beta chain family. In terms of assembly, the RNAP catalytic core consists of 2 alpha, 1 beta, 1 beta' and 1 omega subunit. When a sigma factor is associated with the core the holoenzyme is formed, which can initiate transcription.

The enzyme catalyses RNA(n) + a ribonucleoside 5'-triphosphate = RNA(n+1) + diphosphate. In terms of biological role, DNA-dependent RNA polymerase catalyzes the transcription of DNA into RNA using the four ribonucleoside triphosphates as substrates. The chain is DNA-directed RNA polymerase subunit beta from Staphylococcus aureus (strain COL).